A 65-amino-acid polypeptide reads, in one-letter code: uncharacterized protein (65 aa).

The tract at residues 1–22 (MEKETPQQETKQSTNKESGFFD) is disordered. The span at 7-17 (QQETKQSTNKE) shows a compositional bias: polar residues. Residues 22–65 (DEIIKRTNQLLEKEKELHEKYNKEITSQQDQIDQLKKKINQLKY) are a coiled coil.

This is an uncharacterized protein from Dictyostelium discoideum (Social amoeba).